The sequence spans 451 residues: Enolase (451 aa).

A (2R)-2-phosphoglycerate-binding site is contributed by Gln163. Catalysis depends on Glu205, which acts as the Proton donor. Positions 258, 308, and 335 each coordinate Mg(2+). Residues Lys360, Arg389, Ser390, and Lys411 each coordinate (2R)-2-phosphoglycerate. The active-site Proton acceptor is Lys360.

This sequence belongs to the enolase family. It depends on Mg(2+) as a cofactor.

The protein localises to the cytoplasm. It is found in the secreted. The protein resides in the cell surface. It catalyses the reaction (2R)-2-phosphoglycerate = phosphoenolpyruvate + H2O. The protein operates within carbohydrate degradation; glycolysis; pyruvate from D-glyceraldehyde 3-phosphate: step 4/5. In terms of biological role, catalyzes the reversible conversion of 2-phosphoglycerate (2-PG) into phosphoenolpyruvate (PEP). It is essential for the degradation of carbohydrates via glycolysis. The sequence is that of Enolase from Mycoplasma capricolum subsp. capricolum (strain California kid / ATCC 27343 / NCTC 10154).